Reading from the N-terminus, the 207-residue chain is Ribosomal RNA small subunit methyltransferase G (207 aa).

S-adenosyl-L-methionine is bound by residues Gly-73, Leu-78, 124–125 (VE), and Arg-139.

It belongs to the methyltransferase superfamily. RNA methyltransferase RsmG family.

The protein localises to the cytoplasm. It carries out the reaction guanosine(527) in 16S rRNA + S-adenosyl-L-methionine = N(7)-methylguanosine(527) in 16S rRNA + S-adenosyl-L-homocysteine. Functionally, specifically methylates the N7 position of guanine in position 527 of 16S rRNA. This chain is Ribosomal RNA small subunit methyltransferase G, found in Shigella flexneri.